A 354-amino-acid chain; its full sequence is Methionine import ATP-binding protein MetN (354 aa).

The 243-residue stretch at 8–250 (LDHIDITFRQ…PKEALTQEFI (243 aa)) folds into the ABC transporter domain. 42–49 (GYSGAGKS) contributes to the ATP binding site.

The protein belongs to the ABC transporter superfamily. Methionine importer (TC 3.A.1.24) family. In terms of assembly, the complex is composed of two ATP-binding proteins (MetN), two transmembrane proteins (MetI) and a solute-binding protein (MetQ).

It is found in the cell membrane. It carries out the reaction L-methionine(out) + ATP + H2O = L-methionine(in) + ADP + phosphate + H(+). The enzyme catalyses D-methionine(out) + ATP + H2O = D-methionine(in) + ADP + phosphate + H(+). Functionally, part of the ABC transporter complex MetNIQ involved in methionine import. Responsible for energy coupling to the transport system. In Streptococcus pyogenes serotype M1, this protein is Methionine import ATP-binding protein MetN.